Consider the following 487-residue polypeptide: Iron-sulfur cluster assembly SufBD family protein ycf24 (487 aa).

It belongs to the iron-sulfur cluster assembly SufBD family.

The protein localises to the plastid. It localises to the chloroplast. The sequence is that of Iron-sulfur cluster assembly SufBD family protein ycf24 (ycf24) from Pyropia yezoensis (Susabi-nori).